The sequence spans 261 residues: Lysosome-associated membrane glycoprotein 5 (261 aa).

The first 29 residues, 1-29, serve as a signal peptide directing secretion; the sequence is MDLQGRAVPSVDRLRVLLMLFHTMAQIMA. The Extracellular portion of the chain corresponds to 30 to 234; the sequence is EQEVENLSGL…AVDEREQLEE (205 aa). Asparagine 35, asparagine 53, and asparagine 126 each carry an N-linked (GlcNAc...) asparagine glycan. The chain crosses the membrane as a helical span at residues 235–255; it reads TLPLILGLILGLVIVVTLAIY. At 256–261 the chain is on the cytoplasmic side; sequence HVHPQK.

The protein belongs to the LAMP family. Glycosylated.

It is found in the cytoplasmic vesicle membrane. It localises to the cell membrane. The protein localises to the cell projection. Its subcellular location is the dendrite. The protein resides in the cytoplasmic vesicle. It is found in the secretory vesicle. It localises to the synaptic vesicle membrane. The protein localises to the growth cone membrane. Its subcellular location is the early endosome membrane. The protein resides in the recycling endosome. It is found in the endoplasmic reticulum-Golgi intermediate compartment membrane. It localises to the endosome membrane. Its function is as follows. Plays a role in short-term synaptic plasticity in a subset of GABAergic neurons in the brain. The polypeptide is Lysosome-associated membrane glycoprotein 5 (LAMP5) (Pongo abelii (Sumatran orangutan)).